A 110-amino-acid polypeptide reads, in one-letter code: Small ubiquitin-related modifier 3 (110 aa).

Glycyl lysine isopeptide (Lys-Gly) (interchain with G-Cter in SUMO2) cross-links involve residues Lys5 and Lys7. A Glycyl lysine isopeptide (Lys-Gly) (interchain with G-Cter in SUMO); alternate cross-link involves residue Lys11. Residue Lys11 forms a Glycyl lysine isopeptide (Lys-Gly) (interchain with G-Cter in SUMO2); alternate linkage. Residues 15–92 enclose the Ubiquitin-like domain; that stretch reads DHINLKVAGQ…IDVFQQQTGG (78 aa). Positions 89 to 101 are enriched in polar residues; that stretch reads QTGGTASRASVPT. The disordered stretch occupies residues 89 to 110; the sequence is QTGGTASRASVPTPSHFPDICY. Gly92 is covalently cross-linked (Glycyl lysine isopeptide (Gly-Lys) (interchain with K-? in acceptor proteins)). Positions 93–110 are excised as a propeptide; sequence TASRASVPTPSHFPDICY.

It belongs to the ubiquitin family. SUMO subfamily. As to quaternary structure, interacts with SAE2 and UBE2I. Covalently attached to a number of proteins. Interacts with USP25 (via ts SIM domain); the interaction sumoylates USP25 and inhibits its ubiquitin hydrolyzing activity. Interacts with BMAL1. Post-translationally, polymeric chains can be formed through Lys-11 cross-linking. Cleavage of precursor form by SENP1, SENP2 or SENP5 is necessary for function.

The protein localises to the cytoplasm. It localises to the nucleus. Its subcellular location is the PML body. Ubiquitin-like protein which can be covalently attached to target lysines either as a monomer or as a lysine-linked polymer. Does not seem to be involved in protein degradation and may function as an antagonist of ubiquitin in the degradation process. Plays a role in a number of cellular processes such as nuclear transport, DNA replication and repair, mitosis and signal transduction. Covalent attachment to its substrates requires prior activation by the E1 complex SAE1-SAE2 and linkage to the E2 enzyme UBE2I, and can be promoted by an E3 ligase such as PIAS1-4, RANBP2 or CBX4. Plays a role in the regulation of sumoylation status of SETX. The sequence is that of Small ubiquitin-related modifier 3 (Sumo3) from Rattus norvegicus (Rat).